The primary structure comprises 3797 residues: A-kinase anchor protein 9 (3797 aa).

The tract at residues Met-1–Gln-140 is disordered. 2 stretches are compositionally biased toward polar residues: residues His-50 to Arg-65 and Glu-92 to Asn-108. Residues Lys-115 to Glu-124 are compositionally biased toward basic and acidic residues. The residue at position 139 (Ser-139) is a Phosphoserine. Coiled coils occupy residues Gln-140–Gln-607 and Ile-640–Asn-976. Ser-1288 is subject to Phosphoserine. Disordered stretches follow at residues Ser-1643 to Ser-1668, Val-2323 to Phe-2343, and Ser-2419 to Thr-2454. 2 stretches are compositionally biased toward basic and acidic residues: residues Asp-1648 to Ser-1668 and Gln-2328 to Phe-2343. Residues Ser-1808 to Glu-2377 are a coiled coil. The span at Lys-2438–Thr-2454 shows a compositional bias: polar residues. Residues Asp-2498–Leu-2510 are PKA-RII subunit binding domain. Disordered stretches follow at residues Leu-2604–Gly-2695 and Met-3271–Met-3296. The segment covering Glu-2606 to Gly-2615 has biased composition (acidic residues). Positions Pro-2642–Pro-2669 are enriched in basic and acidic residues. The stretch at Leu-2975–Lys-3325 forms a coiled coil. Over residues Gln-3279–Lys-3294 the composition is skewed to polar residues. A phosphoserine mark is found at Ser-3732, Ser-3755, and Ser-3787.

As to quaternary structure, interacts with the regulatory region of protein kinase N (PKN), protein phosphatase 2A (PP2A), protein phosphatase 1 (PP1) and the immature non-phosphorylated form of PKC epsilon. Interacts with CIP4 and FNBP1. Interacts with chloride intracellular channel proteins CLIC1, CLIC4 and CLIC5. CSNK1D binding promotes its centrosomal subcellular location. Interacts with GM130/GOLGA2; leading to recruitment to the Golgi apparatus. Interacts with KCNQ1; targets protein kinase A (PKA) catalytic and regulatory subunits and protein phosphatase 1 (PP1), to the heterodimer KCNQ1-KCNE1. Interacts with PDE4DIP isoform 2; this interaction stabilizes both proteins. In complex with PDE4DIP isoform 2, recruits CAMSAP2 to the Golgi apparatus. Forms a pericentrosomal complex with CDK5RAP2, EB1/MAPRE1 and PDE4DIP isoform 2; within this complex, MAPRE1 binding to CDK5RAP2 may be mediated by PDE4DIP. Interacts with MAPRE1 and MAPRE3. Interacts (via C-terminus) with CAMSAP2; this interaction is much stronger in the presence of PDE4DIP isoform 2. Interacts with CAMSAP3. Interacts (via C-terminus) with the gamma-tubulin ring complex (gamma-TuRC), composed of gamma-tubulin, TUBGCP2, TUBGCP3, TUBGCP4, TUBGCP5 and TUBGCP6.

The protein resides in the golgi apparatus. The protein localises to the cytoplasm. It localises to the cytoskeleton. Its subcellular location is the microtubule organizing center. It is found in the centrosome. Functionally, scaffolding protein that assembles several protein kinases and phosphatases on the centrosome and Golgi apparatus. Required to maintain the integrity of the Golgi apparatus. Required for microtubule nucleation at the cis-side of the Golgi apparatus. Required for association of the centrosomes with the poles of the bipolar mitotic spindle during metaphase. In complex with PDE4DIP isoform 2/MMG8/SMYLE, recruits CAMSAP2 to the Golgi apparatus and tethers non-centrosomal minus-end microtubules to the Golgi, an important step for polarized cell movement. In complex with PDE4DIP isoform 2, EB1/MAPRE1 and CDK5RAP2, contributes to microtubules nucleation and extension also from the centrosome to the cell periphery. The chain is A-kinase anchor protein 9 (Akap9) from Mus musculus (Mouse).